A 1804-amino-acid polypeptide reads, in one-letter code: Collagen alpha-1(XI) chain (1804 aa).

Positions 1 to 34 (MEPWSRWKTKRWIWDLTISTLVLTFLFQAREVRG) are cleaved as a signal peptide. Residues 35–511 (AAPVDILKAL…SKGPTISAQE (477 aa)) constitute a propeptide, N-terminal propeptide. 2 disulfides stabilise this stretch: Cys60-Cys242 and Cys181-Cys235. A Laminin G-like domain is found at 70-242 (DIAYRVTEEA…DYCDHYSPDC (173 aa)). The tract at residues 229 to 417 (KAAYDYCDHY…DFTETSINGH (189 aa)) is nonhelical region. Asn351 carries N-linked (GlcNAc...) asparagine glycosylation. Residues 418-506 (GAYGEKGQKG…YGGDGSKGPT (89 aa)) are triple-helical region (interrupted). The disordered stretch occupies residues 437-506 (LVEGPPGPAG…YGGDGSKGPT (70 aa)). Residues 440 to 488 (GPPGPAGPAGLMGPPGLQGPSGLPGDPGDRGPPGRPGLPGADGLPGPPG) form the Collagen-like 1 domain. Low complexity-rich tracts occupy residues 447–465 (PAGLMGPPGLQGPSGLPGD) and 477–494 (LPGADGLPGPPGTMLMLP). Residues 507–509 (ISA) are short nonhelical segment. Positions 510–527 (QEAQAQAILQQARIALRG) are telopeptide. Positions 526–1560 (RGPPGPMGLT…KTRRHTESIQ (1035 aa)) are disordered. The tract at residues 528 to 1540 (PPGPMGLTGR…PGPPGPPGEV (1013 aa)) is triple-helical region. Collagen-like domains follow at residues 530–584 (GPMG…GADG), 581–639 (GADG…EIGP), 607–664 (PGDK…PGQP), and 641–698 (GLPG…GPQG). Composition is skewed to gly residues over residues 539–548 (GPVGGPGSAG) and 581–590 (GADGGRGMPG). Lys610 is subject to Allysine. Residues 639–655 (PRGLPGEAGPRGLLGPR) show a composition bias toward low complexity. Over residues 697–708 (QGLPGPQGPIGP) the composition is skewed to pro residues. Low complexity predominate over residues 715–726 (QGKPGLAGLPGA). The 59-residue stretch at 746–804 (GPPGPQGPIGYPGPRGVKGADGVRGLKGSKGEKGEDGFPGFKGDMGLKGDRGEVGQVGP) folds into the Collagen-like 6 domain. Basic and acidic residues predominate over residues 805-814 (RGEDGPEGPK). Composition is skewed to low complexity over residues 873 to 901 (KPGPRGQRGPTGPRGSRGARGPTGKPGPK), 916 to 925 (RGPQGPQGPV), and 969 to 979 (PQGPTGETGPI). Over residues 1040-1049 (GLKGGEGPQG) the composition is skewed to gly residues. A compositionally biased stretch (pro residues) spans 1074-1083 (RPGPQGPPGP). A compositionally biased stretch (low complexity) spans 1084–1108 (AGEKGAPGEKGPQGPAGRDGVQGPV). Gly residues predominate over residues 1160–1169 (GIAGGDGEAG). Composition is skewed to pro residues over residues 1216-1227 (MGPPGPPGPRGP) and 1341-1360 (QPGPPGPSGEAGPPGPPGKR). Low complexity-rich tracts occupy residues 1383-1392 (AEGPPGKTGP) and 1417-1426 (QGLPGAAGQD). Collagen-like domains are found at residues 1391 to 1449 (GPVG…SKGE), 1442 to 1492 (GDPG…PGPA), and 1481 to 1539 (GAKG…PPGE). The span at 1428-1437 (PPGPLGPPGL) shows a compositional bias: pro residues. At Lys1450 the chain carries Allysine. The segment covering 1453-1462 (PGLIGLIGPP) has biased composition (low complexity). The span at 1481-1490 (GAKGDGGIPG) shows a compositional bias: gly residues. Over residues 1491-1507 (PAGPIGPPGPPGLPGPA) the composition is skewed to pro residues. The segment covering 1509–1519 (PKGNKGSSGPT) has biased composition (low complexity). Positions 1528–1537 (PGPPGPPGPP) are enriched in pro residues. A nonhelical region (C-terminal) region spans residues 1541–1561 (IQPLPILSPKKTRRHTESIQA). A propeptide spans 1562-1804 (DAGDNILDYS…FEVGPACFLG (243 aa)) (C-terminal propeptide). The Fibrillar collagen NC1 domain maps to 1575-1803 (EEIFGSLNSL…GFEVGPACFL (229 aa)). A disulfide bond links Cys1605 and Cys1637. Asp1623, Asn1625, Gln1626, Cys1628, and Asp1631 together coordinate Ca(2+). 2 N-linked (GlcNAc...) asparagine glycosylation sites follow: Asn1638 and Asn1707. 2 disulfide bridges follow: Cys1646–Cys1801 and Cys1712–Cys1755.

The protein belongs to the fibrillar collagen family. In terms of assembly, trimers composed of three different chains: alpha 1(XI), alpha 2(XI), and alpha 3(XI). Alpha 3(XI) is probably a post-translational modification of alpha 1(II). Prolines at the third position of the tripeptide repeating unit (G-X-Y) are hydroxylated in some or all of the chains. Post-translationally, N-glycosylated.

The protein localises to the secreted. It is found in the extracellular space. It localises to the extracellular matrix. May play an important role in fibrillogenesis by controlling lateral growth of collagen II fibrils. This is Collagen alpha-1(XI) chain (Col11a1) from Rattus norvegicus (Rat).